The primary structure comprises 157 residues: SsrA-binding protein (157 aa).

It belongs to the SmpB family.

The protein localises to the cytoplasm. Functionally, required for rescue of stalled ribosomes mediated by trans-translation. Binds to transfer-messenger RNA (tmRNA), required for stable association of tmRNA with ribosomes. tmRNA and SmpB together mimic tRNA shape, replacing the anticodon stem-loop with SmpB. tmRNA is encoded by the ssrA gene; the 2 termini fold to resemble tRNA(Ala) and it encodes a 'tag peptide', a short internal open reading frame. During trans-translation Ala-aminoacylated tmRNA acts like a tRNA, entering the A-site of stalled ribosomes, displacing the stalled mRNA. The ribosome then switches to translate the ORF on the tmRNA; the nascent peptide is terminated with the 'tag peptide' encoded by the tmRNA and targeted for degradation. The ribosome is freed to recommence translation, which seems to be the essential function of trans-translation. The polypeptide is SsrA-binding protein (Limosilactobacillus reuteri (strain DSM 20016) (Lactobacillus reuteri)).